Consider the following 472-residue polypeptide: Glutamine synthetase (472 aa).

Residues 17–101 (NNVKFVLLRF…IRCSVYEPTT (85 aa)) enclose the GS beta-grasp domain. The GS catalytic domain maps to 109–472 (PRSIAIRAEN…HPVEFEMYYA (364 aa)). 2 residues coordinate Mg(2+): glutamate 134 and glutamate 136. Residue glutamate 212 coordinates ATP. Mg(2+) is bound by residues glutamate 217 and glutamate 225. L-glutamate contacts are provided by residues 269 to 270 (NG) and glycine 270. Mg(2+) is bound at residue histidine 274. ATP contacts are provided by residues 276-278 (NMS) and serine 278. L-glutamate-binding residues include arginine 326, glutamate 332, and arginine 344. The ATP site is built by arginine 344, arginine 349, and lysine 357. Glutamate 362 contacts Mg(2+). Arginine 364 is an L-glutamate binding site. Tyrosine 402 carries the O-AMP-tyrosine modification.

Belongs to the glutamine synthetase family. Oligomer of 12 subunits arranged in the form of two hexameric ring. The cofactor is Mg(2+).

It is found in the cytoplasm. The catalysed reaction is L-glutamate + NH4(+) + ATP = L-glutamine + ADP + phosphate + H(+). The activity of this enzyme could be controlled by adenylation under conditions of abundant glutamine. Functionally, catalyzes the ATP-dependent biosynthesis of glutamine from glutamate and ammonia. This chain is Glutamine synthetase, found in Haemophilus influenzae (strain ATCC 51907 / DSM 11121 / KW20 / Rd).